Reading from the N-terminus, the 760-residue chain is MKGTPFRSPHLYQEGSSCMHRTIRSVAAVLTVVLSATIPMVPAWSDGEPRSIQFWWPDHLDLSPLRQHAAESDPLGANFNYIKAFQTLDLGAVKKDIAVLLKTPQDWWPADYGNYGPFFIRMAWHGAGTYRTYDGRGGASGAQQRFEPLNSWPDNANLDKARRLLWPIKKKYGEKLSWGDLMVLTGNVALETMGFKTYGFAGGRTDDWEPDLIYWGSGAKFMSNNRDKNGKLEKPLAATQMGLIYVNPEGPNGVPDPVAAARDIREAFGGMAMDDEETVALIAGGHTFGKAHGAASPSKCVGPAPAAAGIEEQGLGWKNKCGTGKGPDAITSGLEGAWSADPVNFTSQYLDNLFGFDWVLTKSPGGAVQWKPKDASADQLVPDAFDASKRHPPMMFTTDIALKTDPSYRKIALSFQKDPEKFKAAFARAWFKLVHRDMGPRSRYFGPEVPKEDLLWQDPLPAITYKAVDEADITDLKQKILASGLTVPELVRTAWGSAASFRGTDKRGGANGARIRLAPEKDWPVNDPQELKKVLDKLESIQTAFNDGNHDGKKISLADLIVLGGNVGVEEAAKKAGYPVTVPFAPGRVDAVQAQTDVKSFAVLEPTADGFRNYYASSNQLSPAEMLVTRASMLNLTVPEMTVLVGGMRVLDANEGHSQLGVLTDHPGVLSNDFFVNLLDMSTKWSKAADTAGVYEGHDRKTDALRWKGSTVDLIFGSNSELRAVAEVYASDDAKEKFVRDFVAAWNKVMTLDRFDLQRQ.

Positions 1 to 45 (MKGTPFRSPHLYQEGSSCMHRTIRSVAAVLTVVLSATIPMVPAWS) are cleaved as a signal peptide. The tryptophyl-tyrosyl-methioninium (Trp-Tyr) (with M-271) cross-link spans 124-245 (WHGAGTYRTY…LAATQMGLIY (122 aa)). The Proton acceptor role is filled by histidine 125. A cross-link (tryptophyl-tyrosyl-methioninium (Tyr-Met) (with W-124)) is located at residues 245 to 271 (YVNPEGPNGVPDPVAAARDIREAFGGM). Position 286 (histidine 286) interacts with heme b.

It belongs to the peroxidase family. Peroxidase/catalase subfamily. Homodimer or homotetramer. Heme b serves as cofactor. In terms of processing, formation of the three residue Trp-Tyr-Met cross-link is important for the catalase, but not the peroxidase activity of the enzyme.

The catalysed reaction is H2O2 + AH2 = A + 2 H2O. It catalyses the reaction 2 H2O2 = O2 + 2 H2O. Bifunctional enzyme with both catalase and broad-spectrum peroxidase activity. This chain is Catalase-peroxidase, found in Granulibacter bethesdensis (strain ATCC BAA-1260 / CGDNIH1).